The sequence spans 53 residues: Ovomucoid (53 aa).

The region spanning 3–53 (VDCSEYPKPGCMMERLPLCGSDNKTYNDKCNFCNAVVESNGTLTLNHFGEC) is the Kazal-like domain. Intrachain disulfides connect C5/C35, C13/C32, and C21/C53. N42 is a glycosylation site (N-linked (GlcNAc...) asparagine).

The protein localises to the secreted. The polypeptide is Ovomucoid (Turnix sylvaticus (Common buttonquail)).